Consider the following 405-residue polypeptide: Probable tRNA sulfurtransferase (405 aa).

Positions 60–165 constitute a THUMP domain; the sequence is DAVINRLKKV…SNGIFLTSEV (106 aa). Residues 183-184, 208-209, arginine 265, glycine 287, and glutamine 296 contribute to the ATP site; these read ML and HF.

This sequence belongs to the ThiI family.

The protein localises to the cytoplasm. The catalysed reaction is [ThiI sulfur-carrier protein]-S-sulfanyl-L-cysteine + a uridine in tRNA + 2 reduced [2Fe-2S]-[ferredoxin] + ATP + H(+) = [ThiI sulfur-carrier protein]-L-cysteine + a 4-thiouridine in tRNA + 2 oxidized [2Fe-2S]-[ferredoxin] + AMP + diphosphate. It catalyses the reaction [ThiS sulfur-carrier protein]-C-terminal Gly-Gly-AMP + S-sulfanyl-L-cysteinyl-[cysteine desulfurase] + AH2 = [ThiS sulfur-carrier protein]-C-terminal-Gly-aminoethanethioate + L-cysteinyl-[cysteine desulfurase] + A + AMP + 2 H(+). The protein operates within cofactor biosynthesis; thiamine diphosphate biosynthesis. Its function is as follows. Catalyzes the ATP-dependent transfer of a sulfur to tRNA to produce 4-thiouridine in position 8 of tRNAs, which functions as a near-UV photosensor. Also catalyzes the transfer of sulfur to the sulfur carrier protein ThiS, forming ThiS-thiocarboxylate. This is a step in the synthesis of thiazole, in the thiamine biosynthesis pathway. The sulfur is donated as persulfide by IscS. The polypeptide is Probable tRNA sulfurtransferase (Pediococcus pentosaceus (strain ATCC 25745 / CCUG 21536 / LMG 10740 / 183-1w)).